Here is a 188-residue protein sequence, read N- to C-terminus: MIAGISGRVLKKSGNVLLVETKSGVVFEIVCDVQTSEEVKEGGECFLHTFLSVSQDGITLYGFSNEMKKELFLSLTKVSRLGPKTALKIISNEDAETLVAMIASQDVEGLSKLPGISKKTAERIVMELKDEFESAGIKDMRIYHESLEALVSLGYPEKQAREAVKQVYREGMKTSELIKEALKFLSHR.

The interval 1 to 64 (MIAGISGRVL…QDGITLYGFS (64 aa)) is domain I. The interval 65 to 143 (NEMKKELFLS…SAGIKDMRIY (79 aa)) is domain II. Tyr-143 is a region of interest (flexible linker). A domain III region spans residues 143–186 (YHESLEALVSLGYPEKQAREAVKQVYREGMKTSELIKEALKFLS).

It belongs to the RuvA family. In terms of assembly, homotetramer. Forms an RuvA(8)-RuvB(12)-Holliday junction (HJ) complex. HJ DNA is sandwiched between 2 RuvA tetramers; dsDNA enters through RuvA and exits via RuvB. An RuvB hexamer assembles on each DNA strand where it exits the tetramer. Each RuvB hexamer is contacted by two RuvA subunits (via domain III) on 2 adjacent RuvB subunits; this complex drives branch migration. In the full resolvosome a probable DNA-RuvA(4)-RuvB(12)-RuvC(2) complex forms which resolves the HJ.

It is found in the cytoplasm. In terms of biological role, the RuvA-RuvB-RuvC complex processes Holliday junction (HJ) DNA during genetic recombination and DNA repair, while the RuvA-RuvB complex plays an important role in the rescue of blocked DNA replication forks via replication fork reversal (RFR). RuvA specifically binds to HJ cruciform DNA, conferring on it an open structure. The RuvB hexamer acts as an ATP-dependent pump, pulling dsDNA into and through the RuvAB complex. HJ branch migration allows RuvC to scan DNA until it finds its consensus sequence, where it cleaves and resolves the cruciform DNA. Promotes Holliday junction (HJ) branch migration in conjunction with RuvB. The chain is Holliday junction branch migration complex subunit RuvA from Thermotoga maritima (strain ATCC 43589 / DSM 3109 / JCM 10099 / NBRC 100826 / MSB8).